The sequence spans 247 residues: Coproheme decarboxylase (247 aa).

Residues R129, 143-147 (YPMDK), H170, Q183, and S221 each bind Fe-coproporphyrin III. Residue Y143 is part of the active site.

Belongs to the ChdC family. Type 1 subfamily. Fe-coproporphyrin III is required as a cofactor.

The catalysed reaction is Fe-coproporphyrin III + 2 H2O2 + 2 H(+) = heme b + 2 CO2 + 4 H2O. The enzyme catalyses Fe-coproporphyrin III + H2O2 + H(+) = harderoheme III + CO2 + 2 H2O. It carries out the reaction harderoheme III + H2O2 + H(+) = heme b + CO2 + 2 H2O. The protein operates within porphyrin-containing compound metabolism; protoheme biosynthesis. Its function is as follows. Involved in coproporphyrin-dependent heme b biosynthesis. Catalyzes the decarboxylation of Fe-coproporphyrin III (coproheme) to heme b (protoheme IX), the last step of the pathway. The reaction occurs in a stepwise manner with a three-propionate intermediate. This is Coproheme decarboxylase from Bacillus cereus (strain ATCC 10987 / NRS 248).